The following is a 296-amino-acid chain: MTAKRIDGKAFAAGVRAQVADHVARLKADHGLVPGLAVVLVGEDPASQVYVGAKGKQTVEVGMASFEHRLSAETSEAELLALIDRLNRDPLVHGILVQLPLPPHLNSDLVINALDPAKDVDGFHISNVGRLGTGQKSMVPCTPLGCLMMLRDHLGNLSGLNAVVVGRSNIVGKPMAQLLLGESCTVTIAHSRTKDLAAVCRGADILVAAVGRPEMITGEFIKPGATVIDVGINRIERDGKTKLVGDVDFASAAEVAGAITPVPGGVGPMTIACLLANTLTACCRANGLPEPQGLTA.

NADP(+)-binding positions include 166 to 168, Ser191, and Ile232; that span reads GRS.

It belongs to the tetrahydrofolate dehydrogenase/cyclohydrolase family. As to quaternary structure, homodimer.

It catalyses the reaction (6R)-5,10-methylene-5,6,7,8-tetrahydrofolate + NADP(+) = (6R)-5,10-methenyltetrahydrofolate + NADPH. The enzyme catalyses (6R)-5,10-methenyltetrahydrofolate + H2O = (6R)-10-formyltetrahydrofolate + H(+). It participates in one-carbon metabolism; tetrahydrofolate interconversion. Catalyzes the oxidation of 5,10-methylenetetrahydrofolate to 5,10-methenyltetrahydrofolate and then the hydrolysis of 5,10-methenyltetrahydrofolate to 10-formyltetrahydrofolate. This chain is Bifunctional protein FolD, found in Cereibacter sphaeroides (strain ATCC 17025 / ATH 2.4.3) (Rhodobacter sphaeroides).